We begin with the raw amino-acid sequence, 907 residues long: Alanine--tRNA ligase (907 aa).

The Zn(2+) site is built by H602, H606, C706, and H710.

Belongs to the class-II aminoacyl-tRNA synthetase family. Requires Zn(2+) as cofactor.

It localises to the cytoplasm. It catalyses the reaction tRNA(Ala) + L-alanine + ATP = L-alanyl-tRNA(Ala) + AMP + diphosphate. Its function is as follows. Catalyzes the attachment of alanine to tRNA(Ala) in a two-step reaction: alanine is first activated by ATP to form Ala-AMP and then transferred to the acceptor end of tRNA(Ala). Also edits incorrectly charged Ser-tRNA(Ala) and Gly-tRNA(Ala) via its editing domain. The sequence is that of Alanine--tRNA ligase from Thermofilum pendens (strain DSM 2475 / Hrk 5).